Reading from the N-terminus, the 469-residue chain is MSIHFSSPVFTSRSAAFSGRGAQVRLSSARPGGLGSSSLYGLGASRPRVAVRSAYGGPVGAGIREVTINQSLLAPLRLDADPSLQRVRQEEREQIKTLNNKFASFIDKVRFLEQQNKLLETKWTLLQEQKSAKSSRLPDIFEAQIAGLRGQLEALQVDGGRLEAELQSMQDVVEDFKNKYEDEINRRAAAENEFVVLKKDVDAAYMSKVELEAKVDALNDEINFLRTLNETELTELQSQISDTSVVLSMDNSRSLDLDGIIAEVKAQYEEMAKCSRAEAEAWYQTKFETLQAQAGKHGDDLRNTRNEISEMNRAIQRLQAEIDNIKDQRAKLEAAIAEAEERGELALKDARAKQEELEAALQRAKQDMARQLREYQELMSVKLALDIEIATYRKLLEGEESRLAGDGVGAVNISVMNSTGGSSSGGGIGLTLGGTMGSNALSFSSSAGPGPLKAYSIRTASASRRSARN.

Serine 2 carries the N-acetylserine modification. Residues serine 2, serine 6, and serine 7 each carry the phosphoserine modification. The head stretch occupies residues 2 to 90 (SIHFSSPVFT…DPSLQRVRQE (89 aa)). Serine 12 carries an O-linked (GlcNAc) serine glycan. The residue at position 20 (arginine 20) is a Dimethylated arginine; alternate. Arginine 20 is subject to Omega-N-methylarginine; alternate. Phosphoserine is present on residues serine 53, serine 71, and serine 83. Residues 90 to 126 (EEREQIKTLNNKFASFIDKVRFLEQQNKLLETKWTLL) form a coil 1A region. One can recognise an IF rod domain in the interval 91–403 (EREQIKTLNN…KLLEGEESRL (313 aa)). Threonine 97 carries the phosphothreonine modification. Residues 127 to 144 (QEQKSAKSSRLPDIFEAQ) form a linker 1 region. Residue lysine 130 forms a Glycyl lysine isopeptide (Lys-Gly) (interchain with G-Cter in SUMO2) linkage. The tract at residues 145-236 (IAGLRGQLEA…TLNETELTEL (92 aa)) is coil 1B. Lysine 179 is modified (N6-acetyllysine). A linker 12 region spans residues 237 to 260 (QSQISDTSVVLSMDNSRSLDLDGI). 2 positions are modified to phosphoserine: serine 252 and serine 254. Residues 261-399 (IAEVKAQYEE…ATYRKLLEGE (139 aa)) form a coil 2 region. Glycyl lysine isopeptide (Lys-Gly) (interchain with G-Cter in SUMO2) cross-links involve residues lysine 265 and lysine 286. Threonine 289 carries the phosphothreonine modification. Glycyl lysine isopeptide (Lys-Gly) (interchain with G-Cter in SUMO2) cross-links involve residues lysine 296 and lysine 331. The segment at 400–469 (ESRLAGDGVG…ASASRRSARN (70 aa)) is tail.

It belongs to the intermediate filament family. As to quaternary structure, heterotetramer of two type I and two type II keratins. Interacts with eukaryotic translation initiator factor 3 (eIF3) subunit EIF3S10. Interacts with GPER1. Arg-20 is dimethylated, probably to asymmetric dimethylarginine.

Functionally, blocks interferon-dependent interphase and stimulates DNA synthesis in cells. The polypeptide is Keratin, type II cytoskeletal 7 (Pan troglodytes (Chimpanzee)).